Here is a 262-residue protein sequence, read N- to C-terminus: Aminoglycoside 3'-phosphotransferase (262 aa).

D187 acts as the Proton acceptor in catalysis.

This sequence belongs to the aminoglycoside phosphotransferase family. Monomer.

Its subcellular location is the cytoplasm. It carries out the reaction kanamycin A + ATP = kanamycin 3'-phosphate + ADP + H(+). Its function is as follows. Resistance to butirosin and structurally-related aminoglycosides, including kanamycin and amikacin. The sequence is that of Aminoglycoside 3'-phosphotransferase from Niallia circulans (Bacillus circulans).